The following is a 641-amino-acid chain: Soluble starch synthase 1, chloroplastic/amyloplastic (641 aa).

A chloroplast-targeting transit peptide spans 1-113; that stretch reads MATAAGMGIG…DSIDKTIFVA (113 aa). The disordered stretch occupies residues 62 to 96; that stretch reads TFLVPTSTPPAPTQSPAPAPTPPPLPDSGVGEIEP. Over residues 68–87 the composition is skewed to pro residues; that stretch reads STPPAPTQSPAPAPTPPPLP. Lys147 is a binding site for ADP-alpha-D-glucose.

It belongs to the glycosyltransferase 1 family. Bacterial/plant glycogen synthase subfamily.

It is found in the plastid. Its subcellular location is the chloroplast. It localises to the amyloplast. It carries out the reaction [(1-&gt;4)-alpha-D-glucosyl](n) + ADP-alpha-D-glucose = [(1-&gt;4)-alpha-D-glucosyl](n+1) + ADP + H(+). It functions in the pathway glycan biosynthesis; starch biosynthesis. This Oryza sativa subsp. indica (Rice) protein is Soluble starch synthase 1, chloroplastic/amyloplastic.